Reading from the N-terminus, the 120-residue chain is MKYNYTVLLSAFTMSVLYSVIYIHSFIIAALITMAFYFLFPYLIFALPLQIMMNKKPKRFSPLYLLYYLAAAFIANAIIFGMLQPSGQSLFQNTAFYLFAVLTALIYWIWDSVLLQKKEA.

Helical transmembrane passes span 3–23 (YNYT…VIYI), 26–46 (FIIA…LIFA), 63–83 (LYLL…FGML), and 95–115 (AFYL…SVLL).

The protein belongs to the UPF0715 family.

Its subcellular location is the cell membrane. This Bacillus subtilis (strain 168) protein is UPF0715 membrane protein YwlA (ywlA).